The primary structure comprises 117 residues: Eukaryotic translation initiation factor 4E-binding protein 1 (117 aa).

2 stretches are compositionally biased toward polar residues: residues 1–12 (MSAGSSCSQTPS) and 33–47 (YSTT…TTPG). A disordered region spans residues 1 to 47 (MSAGSSCSQTPSRAIPTRRVALGDGVQLPPGDYSTTPGGTLFSTTPG). S2 bears the N-acetylserine mark. Phosphothreonine occurs at positions 36 and 40. S43 carries the phosphoserine modification. T45 and T49 each carry phosphothreonine. The residue at position 53 (Y53) is a Phosphotyrosine. A YXXXXLphi motif motif is present at residues 53–59 (YDRKFLM). Residue K56 forms a Glycyl lysine isopeptide (Lys-Gly) (interchain with G-Cter in ubiquitin) linkage. S64 bears the Phosphoserine mark. The tract at residues 64-117 (SPVAKTPPKDLPAIPGVTSPTSDEPPMQASQSQLPSSPEDKRAGGEESQFEMDI) is disordered. T69 carries the post-translational modification Phosphothreonine. Over residues 81–99 (TSPTSDEPPMQASQSQLPS) the composition is skewed to polar residues. Residues S82, S95, S99, S100, and S111 each carry the phosphoserine modification. The TOS motif motif lies at 113–117 (FEMDI).

The protein belongs to the eIF4E-binding protein family. As to quaternary structure, hypophosphorylated EIF4EBP1 competes with EIF4G1/EIF4G3 to interact with EIF4E; insulin stimulated MAP-kinase (MAPK1 and MAPK3) or mTORC1 phosphorylation of EIF4EBP1 causes dissociation of the complex allowing EIF4G1/EIF4G3 to bind and consequent initiation of translation. Interacts (via TOS motif) with RPTOR; promoting phosphorylation by mTORC1. Post-translationally, phosphorylated on serine and threonine residues in response to insulin, EGF and PDGF. Phosphorylation at Thr-36, Thr-45, Ser-64 and Thr-69, corresponding to the hyperphosphorylated form, is regulated by mTORC1 and abolishes binding to EIF4E. Ubiquitinated: when eIF4E levels are low, hypophosphorylated form is ubiquitinated by the BCR(KLHL25) complex, leading to its degradation and serving as a homeostatic mechanism to maintain translation and prevent eIF4E inhibition when eIF4E levels are low. Not ubiquitinated when hyperphosphorylated (at Thr-36, Thr-45, Ser-64 and Thr-69) or associated with eIF4E. As to expression, highest expression in fat cells.

It localises to the cytoplasm. The protein localises to the nucleus. Functionally, repressor of translation initiation that regulates EIF4E activity by preventing its assembly into the eIF4F complex: hypophosphorylated form competes with EIF4G1/EIF4G3 and strongly binds to EIF4E, leading to repress translation. In contrast, hyperphosphorylated form dissociates from EIF4E, allowing interaction between EIF4G1/EIF4G3 and EIF4E, leading to initiation of translation. Mediates the regulation of protein translation by hormones, growth factors and other stimuli that signal through the MAP kinase and mTORC1 pathways. This Mus musculus (Mouse) protein is Eukaryotic translation initiation factor 4E-binding protein 1 (Eif4ebp1).